A 115-amino-acid chain; its full sequence is Large ribosomal subunit protein bL19 (115 aa).

Belongs to the bacterial ribosomal protein bL19 family.

Its function is as follows. This protein is located at the 30S-50S ribosomal subunit interface and may play a role in the structure and function of the aminoacyl-tRNA binding site. This is Large ribosomal subunit protein bL19 from Yersinia pseudotuberculosis serotype O:1b (strain IP 31758).